We begin with the raw amino-acid sequence, 701 residues long: MNPVTKQFQFGQSTVTLETGRIARQATGAVLVTMDDVSVLVTVVGAKSPAEGRDFFPLSVHYQEKTYAAGRIPGGFFKREGRPSEKETLTSRLIDRPIRPLFPEGFMNEVQVVCTVVSTNKKSDPDIAAMIGTSAALAISGIPFAGPIGAARVGFHPEIGYILNPTYEQLQSSSLDMVVAGTEDAVLMVESEADELTEDQMLGAVLFAHDEFQAVIRAVKELAAEAGKPAWDWKAPAENTVLVNAIKAELGEAISQAYTITIKQDRYNRLGELRDQAVALFAGEEEGKFPASEVKDVFGLLEYRTVRENIVNGKPRIDGRDTRTVRPLRIEVGVLGKTHGSALFTRGETQALVVATLGTARDAQLLDTLEGERKDAFMLHYNFPPFSVGECGRMGSPGRREIGHGRLARRGVAAMLPTQDEFPYTIRVVSEITESNGSSSMASVCGASLALMDAGVPVKAPVAGIAMGLVKEGEKFAVLTDILGDEDHLGDMDFKVAGTDKGVTALQMDIKINGITEEIMEIALGQALEARLNILGQMNQVIAKPRAELSENAPTMLQMKIDSDKIRDVIGKGGATIRGICEETKASIDIEDDGSVKIYGETKEAAEAAKLRVLAITAEAEIGKIYVGKVERIVDFGAFVNILPGKDGLVHISQISDKRIDKVTDVLQEGQEVKVLVLDVDNRGRIKLSIKDVAAAEASGV.

D487 and D493 together coordinate Mg(2+). The 60-residue stretch at P554 to V613 folds into the KH domain. Residues G623–K691 form the S1 motif domain.

Belongs to the polyribonucleotide nucleotidyltransferase family. As to quaternary structure, component of the RNA degradosome, which is a multiprotein complex involved in RNA processing and mRNA degradation. The cofactor is Mg(2+).

The protein localises to the cytoplasm. It carries out the reaction RNA(n+1) + phosphate = RNA(n) + a ribonucleoside 5'-diphosphate. Involved in mRNA degradation. Catalyzes the phosphorolysis of single-stranded polyribonucleotides processively in the 3'- to 5'-direction. This chain is Polyribonucleotide nucleotidyltransferase, found in Pseudomonas aeruginosa (strain LESB58).